The sequence spans 197 residues: Recombination protein RecR (197 aa).

A C4-type zinc finger spans residues 57-72 (CSICFAITEDDPCAIC). In terms of domain architecture, Toprim spans 79 to 174 (GTICVVENSQ…RISRLAHGIP (96 aa)).

The protein belongs to the RecR family.

Functionally, may play a role in DNA repair. It seems to be involved in an RecBC-independent recombinational process of DNA repair. It may act with RecF and RecO. This chain is Recombination protein RecR, found in Pelobacter propionicus (strain DSM 2379 / NBRC 103807 / OttBd1).